The sequence spans 567 residues: Hexose transporter HXT16 (567 aa).

Residues 1 to 19 (MASEQSSPEINADNLNSSA) are compositionally biased toward polar residues. Residues 1–32 (MASEQSSPEINADNLNSSAADVHVQPPGEKEW) are disordered. Over 1 to 55 (MASEQSSPEINADNLNSSAADVHVQPPGEKEWSDGFYDKEVINGNTPDAPKRGFL) the chain is Cytoplasmic. Residues 56 to 76 (GYLIIYLLCYPVSFGGFLPGW) traverse the membrane as a helical segment. Over 77 to 112 (DSGITAGFINMDNFKMNFGSYKHSTGEYYLSNVRMG) the chain is Extracellular. Residues 113-133 (LLVAMFSVGCSIGGVAFARLA) traverse the membrane as a helical segment. Topologically, residues 134–139 (DTLGRR) are cytoplasmic. The helical transmembrane segment at 140–160 (LAIVIVVLVYMVGAIIQISSN) threads the bilayer. Residues 161–170 (HKWYQYFVGK) are Extracellular-facing. Residues 171-191 (IIYGLGAGGCSVLCPMLLSEI) form a helical membrane-spanning segment. The Cytoplasmic portion of the chain corresponds to 192-197 (APTDLR). Residues 198–218 (GGLVSLYQLNMTFGIFLGYCS) traverse the membrane as a helical segment. Residues 219-232 (VYGTRKYSNTAQWR) are Extracellular-facing. The helical transmembrane segment at 233 to 253 (IPVGLCFLWALIIIVGMLLVP) threads the bilayer. At 254–336 (ESPRYLIECE…VQTFLQLTGE (83 aa)) the chain is on the cytoplasmic side. The chain crosses the membrane as a helical span at residues 337–353 (NYFFFYGTTIFKSVGLT). The Extracellular portion of the chain corresponds to 354–359 (DGFETS). The helical transmembrane segment at 360–377 (IVLGTVNFFSTIIAVMVV) threads the bilayer. Topologically, residues 378–384 (DKIGRRK) are cytoplasmic. The chain crosses the membrane as a helical span at residues 385-405 (CLLFGAASMMACMVIFASIGV). The Extracellular portion of the chain corresponds to 406–427 (KCLYPHGQDGPSSKGAGNAMIV). The helical transmembrane segment at 428-448 (FTCFYIFCFATTWAPVAYIVV) threads the bilayer. At 449–465 (AESFPSKVKSKAMSIST) the chain is on the cytoplasmic side. Residues 466–486 (AFNWLWQFLIGFFTPFITGSI) traverse the membrane as a helical segment. His-487 is a topological domain (extracellular). The helical transmembrane segment at 488–508 (FYYGYVFVGCLVAMFLYVFFF) threads the bilayer. Over 509 to 567 (LPETIGLSLEETQLLYEEGIKPWKSASWVPPSRRGASSRETEAKKKSWKEVLKFPKSFN) the chain is Cytoplasmic. The interval 533-555 (SASWVPPSRRGASSRETEAKKKS) is disordered. Positions 545–555 (SSRETEAKKKS) are enriched in basic and acidic residues.

The protein belongs to the major facilitator superfamily. Sugar transporter (TC 2.A.1.1) family.

It localises to the membrane. Functionally, probable glucose transporter. The polypeptide is Hexose transporter HXT16 (HXT16) (Saccharomyces cerevisiae (strain ATCC 204508 / S288c) (Baker's yeast)).